The primary structure comprises 277 residues: Large ribosomal subunit protein uL2 (277 aa).

Disordered stretches follow at residues 36–55 and 213–277; these read PLPK…RHHG and WKGI…RKKK.

It belongs to the universal ribosomal protein uL2 family. In terms of assembly, part of the 50S ribosomal subunit. Forms a bridge to the 30S subunit in the 70S ribosome.

Its function is as follows. One of the primary rRNA binding proteins. Required for association of the 30S and 50S subunits to form the 70S ribosome, for tRNA binding and peptide bond formation. It has been suggested to have peptidyltransferase activity; this is somewhat controversial. Makes several contacts with the 16S rRNA in the 70S ribosome. The polypeptide is Large ribosomal subunit protein uL2 (Staphylococcus saprophyticus subsp. saprophyticus (strain ATCC 15305 / DSM 20229 / NCIMB 8711 / NCTC 7292 / S-41)).